Consider the following 513-residue polypeptide: Maturase K (513 aa).

Belongs to the intron maturase 2 family. MatK subfamily.

The protein resides in the plastid. The protein localises to the chloroplast. Usually encoded in the trnK tRNA gene intron. Probably assists in splicing its own and other chloroplast group II introns. This is Maturase K from Eleusine indica (Goosegrass).